A 451-amino-acid chain; its full sequence is Tubby-like F-box protein 12 (451 aa).

In terms of domain architecture, F-box spans 57-112 (SRWVGLPPELLRDVMKRLEEGESNWPSRKDVVACAAVCRTWREICKDIVQSPEICG). Positions 387–406 (LEQQQQQQQQNHASSSSSAS) are enriched in low complexity. A disordered region spans residues 387–407 (LEQQQQQQQQNHASSSSSASD).

The protein belongs to the TUB family. As to expression, ubiquitous.

The chain is Tubby-like F-box protein 12 (TULP12) from Oryza sativa subsp. japonica (Rice).